A 402-amino-acid chain; its full sequence is MQTLPSPVQATPTETAIVRRKTRPVPIGSVVIGGGHPVAVQSMINEDTLDIEGSVAAIRRLHEIGCEIVRVTVPSLAHAKAMEEIRDRLYKTYKPVPLVADVHHNGMKIALEVAKYVDNVRINPGLYVFEKPKPNRTEYTQAEFDEIGAKIRETLEPLVISLRDQGKSMRIGVNHGSLAERMLFTYGDTPEGMVESALEFIRICESLNFYNLEISLKASRVPVMIAANRLMVKRMDELGMDYPLHLGVTEAGDGEYGRIKSTAGIATLLAEGIGDTIRVSLTEAPEKEIPVCYGILQALGLRRTMVEYVACPSCGRTLFNLEEVLHKVREATKHLTGLNIAVMGCIVNGPGEMADADYGYVGKQPGYISLYRGREEVKKVPEAEGVAALVELIKADGRWVDP.

4 residues coordinate [4Fe-4S] cluster: Cys311, Cys314, Cys345, and Glu352.

Belongs to the IspG family. [4Fe-4S] cluster serves as cofactor.

It carries out the reaction (2E)-4-hydroxy-3-methylbut-2-enyl diphosphate + 2 oxidized [2Fe-2S]-[ferredoxin] + H2O = 2-C-methyl-D-erythritol 2,4-cyclic diphosphate + 2 reduced [2Fe-2S]-[ferredoxin] + H(+). The protein operates within isoprenoid biosynthesis; isopentenyl diphosphate biosynthesis via DXP pathway; isopentenyl diphosphate from 1-deoxy-D-xylulose 5-phosphate: step 5/6. Converts 2C-methyl-D-erythritol 2,4-cyclodiphosphate (ME-2,4cPP) into 1-hydroxy-2-methyl-2-(E)-butenyl 4-diphosphate, using ferredoxin I (PetF) as the reducing agent. The protein is 4-hydroxy-3-methylbut-2-en-1-yl diphosphate synthase (ferredoxin) of Thermosynechococcus vestitus (strain NIES-2133 / IAM M-273 / BP-1).